The primary structure comprises 304 residues: Non-specific ribonucleoside hydrolase RihC (304 aa).

The active site involves His-233.

Belongs to the IUNH family. RihC subfamily.

In terms of biological role, hydrolyzes both purine and pyrimidine ribonucleosides with a broad-substrate specificity. This chain is Non-specific ribonucleoside hydrolase RihC, found in Escherichia coli O127:H6 (strain E2348/69 / EPEC).